The primary structure comprises 342 residues: N-acetyl-gamma-glutamyl-phosphate reductase (342 aa).

Cys-147 is a catalytic residue.

It belongs to the NAGSA dehydrogenase family. Type 1 subfamily.

The protein resides in the cytoplasm. It catalyses the reaction N-acetyl-L-glutamate 5-semialdehyde + phosphate + NADP(+) = N-acetyl-L-glutamyl 5-phosphate + NADPH + H(+). It participates in amino-acid biosynthesis; L-arginine biosynthesis; N(2)-acetyl-L-ornithine from L-glutamate: step 3/4. Its function is as follows. Catalyzes the NADPH-dependent reduction of N-acetyl-5-glutamyl phosphate to yield N-acetyl-L-glutamate 5-semialdehyde. This Campylobacter jejuni subsp. jejuni serotype O:6 (strain 81116 / NCTC 11828) protein is N-acetyl-gamma-glutamyl-phosphate reductase.